Here is an 85-residue protein sequence, read N- to C-terminus: MAHKKAGGSTRNGRDSESKRLGVKRFGGEAVLAGSIIVRQRGTKFHAGINVGCGKDHTLFALADGKVKFEVKGPKNRKFISIEAE.

Residues 1–20 are disordered; that stretch reads MAHKKAGGSTRNGRDSESKR.

It belongs to the bacterial ribosomal protein bL27 family.

The protein is Large ribosomal subunit protein bL27 of Yersinia pseudotuberculosis serotype O:1b (strain IP 31758).